A 357-amino-acid chain; its full sequence is Protein pelota homolog (357 aa).

The protein belongs to the eukaryotic release factor 1 family. Pelota subfamily. Monomer. A divalent metal cation serves as cofactor.

The protein resides in the cytoplasm. Its function is as follows. May function in recognizing stalled ribosomes, interact with stem-loop structures in stalled mRNA molecules, and effect endonucleolytic cleavage of the mRNA. May play a role in the release non-functional ribosomes and degradation of damaged mRNAs. Has endoribonuclease activity. This chain is Protein pelota homolog, found in Halobacterium salinarum (strain ATCC 29341 / DSM 671 / R1).